The sequence spans 755 residues: uncharacterized protein (755 aa).

A run of 9 helical transmembrane segments spans residues 46–66 (LGLG…GGLY), 70–90 (LKTI…GTIV), 93–113 (GWGL…YLAV), 118–138 (GAMV…NVST), 143–163 (FTSL…IWPF), 411–431 (IAHL…IFVL), 446–466 (LLGT…IQDP), 482–502 (ALLR…ALIL), and 514–534 (ALLS…GLAF).

The protein belongs to the YccS/YhfK family.

Its subcellular location is the cell membrane. This is an uncharacterized protein from Synechocystis sp. (strain ATCC 27184 / PCC 6803 / Kazusa).